The chain runs to 294 residues: 4-diphosphocytidyl-2-C-methyl-D-erythritol kinase (294 aa).

Lys11 is an active-site residue. 96-106 lines the ATP pocket; that stretch reads PVAAGIGGGSA. Asp138 is a catalytic residue.

The protein belongs to the GHMP kinase family. IspE subfamily.

It carries out the reaction 4-CDP-2-C-methyl-D-erythritol + ATP = 4-CDP-2-C-methyl-D-erythritol 2-phosphate + ADP + H(+). The protein operates within isoprenoid biosynthesis; isopentenyl diphosphate biosynthesis via DXP pathway; isopentenyl diphosphate from 1-deoxy-D-xylulose 5-phosphate: step 3/6. Catalyzes the phosphorylation of the position 2 hydroxy group of 4-diphosphocytidyl-2C-methyl-D-erythritol. The polypeptide is 4-diphosphocytidyl-2-C-methyl-D-erythritol kinase (Rhodopseudomonas palustris (strain BisB5)).